Reading from the N-terminus, the 337-residue chain is Inositol 2-dehydrogenase (337 aa).

The protein belongs to the Gfo/Idh/MocA family. Homotetramer.

It catalyses the reaction myo-inositol + NAD(+) = scyllo-inosose + NADH + H(+). Involved in the oxidation of myo-inositol (MI) to 2-keto-myo-inositol (2KMI or 2-inosose). The sequence is that of Inositol 2-dehydrogenase from Arthrobacter sp. (strain FB24).